Reading from the N-terminus, the 85-residue chain is Large ribosomal subunit protein bL27 (85 aa).

A disordered region spans residues 1–22 (MAHKKAGGSTRNGRDSESKRLG).

The protein belongs to the bacterial ribosomal protein bL27 family.

The polypeptide is Large ribosomal subunit protein bL27 (Aliivibrio salmonicida (strain LFI1238) (Vibrio salmonicida (strain LFI1238))).